We begin with the raw amino-acid sequence, 476 residues long: Proline--tRNA ligase (476 aa).

Belongs to the class-II aminoacyl-tRNA synthetase family. ProS type 3 subfamily. In terms of assembly, homodimer.

The protein localises to the cytoplasm. It catalyses the reaction tRNA(Pro) + L-proline + ATP = L-prolyl-tRNA(Pro) + AMP + diphosphate. Functionally, catalyzes the attachment of proline to tRNA(Pro) in a two-step reaction: proline is first activated by ATP to form Pro-AMP and then transferred to the acceptor end of tRNA(Pro). The protein is Proline--tRNA ligase of Mycoplasmopsis pulmonis (strain UAB CTIP) (Mycoplasma pulmonis).